A 247-amino-acid chain; its full sequence is Enolase-phosphatase E1 (247 aa).

It belongs to the HAD-like hydrolase superfamily. MasA/MtnC family. As to quaternary structure, monomer. It depends on Mg(2+) as a cofactor.

The enzyme catalyses 5-methylsulfanyl-2,3-dioxopentyl phosphate + H2O = 1,2-dihydroxy-5-(methylsulfanyl)pent-1-en-3-one + phosphate. It functions in the pathway amino-acid biosynthesis; L-methionine biosynthesis via salvage pathway; L-methionine from S-methyl-5-thio-alpha-D-ribose 1-phosphate: step 3/6. Its pathway is amino-acid biosynthesis; L-methionine biosynthesis via salvage pathway; L-methionine from S-methyl-5-thio-alpha-D-ribose 1-phosphate: step 4/6. Bifunctional enzyme that catalyzes the enolization of 2,3-diketo-5-methylthiopentyl-1-phosphate (DK-MTP-1-P) into the intermediate 2-hydroxy-3-keto-5-methylthiopentenyl-1-phosphate (HK-MTPenyl-1-P), which is then dephosphorylated to form the acireductone 1,2-dihydroxy-3-keto-5-methylthiopentene (DHK-MTPene). The polypeptide is Enolase-phosphatase E1 (Leptospira biflexa serovar Patoc (strain Patoc 1 / Ames)).